The following is a 138-amino-acid chain: Large ribosomal subunit protein bL17 (138 aa).

Belongs to the bacterial ribosomal protein bL17 family. In terms of assembly, part of the 50S ribosomal subunit. Contacts protein L32.

This chain is Large ribosomal subunit protein bL17, found in Methylorubrum extorquens (strain PA1) (Methylobacterium extorquens).